Here is a 908-residue protein sequence, read N- to C-terminus: E3 ubiquitin-protein ligase ZNF598 (908 aa).

Residues 27-67 (CVLCCGDLEATALGRCDHPVCYRCSTKMRVLCEQRYCAVCR) form an RING-type zinc finger. The C2H2-type zinc finger occupies 185 to 208 (PLCKFCDERYLDNDELLKHLRRDH). 5 disordered regions span residues 292–338 (SRRS…KREE), 350–441 (SVAA…EEDF), 467–557 (PGPP…TVQG), 569–619 (SLLA…LEAP), and 719–744 (PSSHSACAPSPTTTTTTTTTTKTPGL). Residue Ser-295 is modified to Phosphoserine. Tyr-304 bears the Phosphotyrosine mark. A compositionally biased stretch (low complexity) spans 313–329 (QGRAGRASGRGAQQNRR). A compositionally biased stretch (basic and acidic residues) spans 358–385 (ETQRVEDREEGSRPKKEEAAARVPEEPR). The residue at position 433 (Ser-433) is a Phosphoserine. Positions 482–501 (PALVSSAPKPSSAPSSLISA) are enriched in low complexity. A compositionally biased stretch (basic residues) spans 529-538 (KAGKGSRGGR).

This sequence belongs to the ZNF598/HEL2 family. In terms of assembly, interacts with the E2 ubiquitin-conjugating enzyme UBE2D3. Component of the 4EHP-GYF2 complex, at least composed of EIF4E2, GIGYF2 and ZNF598.

The protein resides in the cytoplasm. It localises to the cytosol. It carries out the reaction S-ubiquitinyl-[E2 ubiquitin-conjugating enzyme]-L-cysteine + [acceptor protein]-L-lysine = [E2 ubiquitin-conjugating enzyme]-L-cysteine + N(6)-ubiquitinyl-[acceptor protein]-L-lysine.. The protein operates within protein modification; protein ubiquitination. E3 ubiquitin-protein ligase that plays a key role in the ribosome quality control (RQC), a pathway that takes place when a ribosome has stalled during translation, leading to degradation of nascent peptide chains. ZNF598 is activated when ribosomes are stalled within an mRNA following translation of prematurely polyadenylated mRNAs. Acts as a ribosome collision sensor: specifically recognizes and binds collided di-ribosome, which arises when a trailing ribosome encounters a slower leading ribosome, leading to terminally arrest translation. Following binding to colliding ribosomes, mediates monoubiquitination of 40S ribosomal proteins RPS10/eS10 and RPS3/uS3, and 'Lys-63'-linked polyubiquitination of RPS20/uS10. Polyubiquitination of RPS20/uS10 promotes recruitment of the RQT (ribosome quality control trigger) complex, which drives the disassembly of stalled ribosomes, followed by degradation of nascent peptides. E3 ubiquitin-protein ligase activity is dependent on the E2 ubiquitin-conjugating enzyme UBE2D3. Also acts as an adapter that recruits the 4EHP-GYF2 complex to mRNAs. Independently of its role in RQC, may also act as a negative regulator of interferon-stimulated gene (ISG) expression. This chain is E3 ubiquitin-protein ligase ZNF598, found in Mus musculus (Mouse).